Here is a 142-residue protein sequence, read N- to C-terminus: Large ribosomal subunit protein uL13 (142 aa).

The protein belongs to the universal ribosomal protein uL13 family. In terms of assembly, part of the 50S ribosomal subunit.

Its function is as follows. This protein is one of the early assembly proteins of the 50S ribosomal subunit, although it is not seen to bind rRNA by itself. It is important during the early stages of 50S assembly. The sequence is that of Large ribosomal subunit protein uL13 from Pseudomonas fluorescens (strain ATCC BAA-477 / NRRL B-23932 / Pf-5).